A 359-amino-acid chain; its full sequence is Src kinase-associated phosphoprotein 1 (359 aa).

In terms of domain architecture, PH spans 107 to 210 (NVIKQGYLEK…WVDQISFLLK (104 aa)). 3 positions are modified to phosphotyrosine: Tyr142, Tyr219, and Tyr232. The span at 219 to 237 (YEEDEEEEEKEETYDDIDG) shows a compositional bias: acidic residues. Positions 219–239 (YEEDEEEEEKEETYDDIDGFD) are disordered. 2 positions are modified to phosphotyrosine; by FYN: Tyr271 and Tyr295. The tract at residues 290-295 (RKGVDY) is interaction with FYB1. The region spanning 294-355 (DYASYYQGLW…PKEYLTTAFE (62 aa)) is the SH3 domain.

This sequence belongs to the SKAP family. As to quaternary structure, homodimer. Interacts with FYN. Interacts with PTPRC. Interacts with GRB2 when phosphorylated on Tyr-271. Interacts with FYB1, which is required for SKAP2 protein stability. Part of a complex consisting of SKAP1, FYB1 and CLNK. Interacts with RASGRP1. Interacts with FYB2. Post-translationally, phosphorylated on tyrosines. Phosphorylation by FYN on Tyr-271 is required for GRB2 interaction. Phosphorylation by FYN on Tyr-295 abolishes interaction with FYB1. Tyr-232 is dephosphorylated by PTPRC. Highly expressed in thymocytes and peripheral blood lymphocytes. Also expressed in spleen cells and testis. Present in T-cells (at protein level).

It is found in the cytoplasm. It localises to the nucleus. Its subcellular location is the cell membrane. Its function is as follows. Positively regulates T-cell receptor signaling by enhancing the MAP kinase pathway. Required for optimal conjugation between T-cells and antigen-presenting cells by promoting the clustering of integrin ITGAL on the surface of T-cells. May be involved in high affinity immunoglobulin epsilon receptor signaling in mast cells. The polypeptide is Src kinase-associated phosphoprotein 1 (SKAP1) (Homo sapiens (Human)).